The following is an 812-amino-acid chain: Eukaryotic translation initiation factor 3 subunit C (812 aa).

Residues 1 to 110 form a disordered region; sequence MSRFFSSNYE…EESDEEDGKK (110 aa). Composition is skewed to acidic residues over residues 18–30 and 38–64; these read SEED…EEDL and SELD…DSDD. A phosphoserine mark is found at S98, S99, and S103. A PCI domain is found at 608-783; the sequence is YHQHINLDLI…TIFVVEKGDE (176 aa).

It belongs to the eIF-3 subunit C family. As to quaternary structure, the eukaryotic translation initiation factor 3 (eIF-3) core complex is composed of TIF32, PRT1, NIP1, TIF34 and TIF35. A subcomplex of TIF32, NIP1 and PRT1 mediates the interaction with eIF-1, TIF5/eIF-5 and HCR1. The factors eIF-1, eIF-2, eIF-3, TIF5/eIF-5 and methionyl-tRNAi form a multifactor complex (MFC) that may bind to the 40S ribosome. TIF32, NIP1 and TIF5/eIF-5 comprise a minimal 40S-ribosome-binding unit. NIP1 interacts with TIF5/eIF-5 and SUI1.

The protein resides in the cytoplasm. Component of the eukaryotic translation initiation factor 3 (eIF-3) complex, which is involved in protein synthesis of a specialized repertoire of mRNAs and, together with other initiation factors, stimulates binding of mRNA and methionyl-tRNAi to the 40S ribosome. The eIF-3 complex specifically targets and initiates translation of a subset of mRNAs involved in cell proliferation. The chain is Eukaryotic translation initiation factor 3 subunit C from Saccharomyces cerevisiae (strain ATCC 204508 / S288c) (Baker's yeast).